The chain runs to 76 residues: DNA-directed RNA polymerase subunit omega (76 aa).

It belongs to the RNA polymerase subunit omega family. In terms of assembly, in cyanobacteria the RNAP catalytic core is composed of 2 alpha, 1 beta, 1 beta', 1 gamma and 1 omega subunit. When a sigma factor is associated with the core the holoenzyme is formed, which can initiate transcription.

The catalysed reaction is RNA(n) + a ribonucleoside 5'-triphosphate = RNA(n+1) + diphosphate. Its function is as follows. Promotes RNA polymerase assembly. Latches the N- and C-terminal regions of the beta' subunit thereby facilitating its interaction with the beta and alpha subunits. This chain is DNA-directed RNA polymerase subunit omega (rpoZ), found in Synechocystis sp. (strain ATCC 27184 / PCC 6803 / Kazusa).